A 377-amino-acid chain; its full sequence is Chaperone protein DnaJ (377 aa).

Residues 5–70 form the J domain; sequence DYYEILGVSK…QKRAAYDQYG (66 aa). Residues 132-210 form a CR-type zinc finger; that stretch reads GVTKEIRIPT…CHGHGRVEKT (79 aa). Zn(2+)-binding residues include cysteine 145, cysteine 148, cysteine 162, cysteine 165, cysteine 184, cysteine 187, cysteine 198, and cysteine 201. CXXCXGXG motif repeat units lie at residues 145–152, 162–169, 184–191, and 198–205; these read CDVCHGSG, CPTCHGAG, CPHCQGRG, and CNKCHGHG.

The protein belongs to the DnaJ family. In terms of assembly, homodimer. The cofactor is Zn(2+).

Its subcellular location is the cytoplasm. In terms of biological role, participates actively in the response to hyperosmotic and heat shock by preventing the aggregation of stress-denatured proteins and by disaggregating proteins, also in an autonomous, DnaK-independent fashion. Unfolded proteins bind initially to DnaJ; upon interaction with the DnaJ-bound protein, DnaK hydrolyzes its bound ATP, resulting in the formation of a stable complex. GrpE releases ADP from DnaK; ATP binding to DnaK triggers the release of the substrate protein, thus completing the reaction cycle. Several rounds of ATP-dependent interactions between DnaJ, DnaK and GrpE are required for fully efficient folding. Also involved, together with DnaK and GrpE, in the DNA replication of plasmids through activation of initiation proteins. This chain is Chaperone protein DnaJ, found in Klebsiella pneumoniae (strain 342).